The chain runs to 1207 residues: DNA-directed RNA polymerase, mitochondrial (1207 aa).

The N-terminal 41 residues, 1-41 (MSALRWTRSAAGLGRVLRSPGPHRPPSEEGTFGGFCSSRRS), are a transit peptide targeting the mitochondrion. Disordered regions lie at residues 1 to 48 (MSAL…SPRE) and 82 to 103 (KKVQVDRPPQGHSSRWAQKLEA). 2 PPR repeats span residues 232-266 (TLHMYNTVMLGWARKGSFRELVYVFLMLKDAGLSP) and 267-302 (DLCSYAAALQCMGRRDQDVRTIQRCLKQMMEEGFQP). Positions 702-724 (VPPPRSEAPRPARYQLPPGSTPV) are disordered. Positions 773–1207 (FRGRTYPCPP…QVIRSTYFFS (435 aa)) are mediates interaction with TEFM. Active-site residues include aspartate 893, lysine 962, and aspartate 1121.

The protein belongs to the phage and mitochondrial RNA polymerase family. As to quaternary structure, homodimer. Component of the mitochondrial transcription initiation complex, composed at least of TFB2M, TFAM and POLRMT. In this complex TFAM recruits POLRMT to the promoter whereas TFB2M induces structural changes in POLRMT to enable promoter opening and trapping of the DNA non-template strand. Upon metabolic stress, forms a complex composed of FOXO3, SIRT3 and mitochondrial RNA polymerase POLRMT; the complex is recruited to mtDNA in a SIRT3-dependent manner. Also forms a complex composed of FOXO3, SIRT3, TFAM and POLRMT. Interacts with TFB1M and TFB2M, leading to the stimulation of transcription. Interacts with TEFM. Interacts with MTRES1.

It localises to the mitochondrion. It carries out the reaction RNA(n) + a ribonucleoside 5'-triphosphate = RNA(n+1) + diphosphate. DNA-dependent RNA polymerase catalyzes the transcription of mitochondrial DNA into RNA using the four ribonucleoside triphosphates as substrates. Component of the mitochondrial transcription initiation complex, composed at least of TFB2M, TFAM and POLRMT that is required for basal transcription of mitochondrial DNA. In this complex, TFAM recruits POLRMT to a specific promoter whereas TFB2M induces structural changes in POLRMT to enable promoter opening and trapping of the DNA non-template strand. Has DNA primase activity. Catalyzes the synthesis of short RNA primers that are necessary for the initiation of lagging-strand DNA synthesis from the origin of light-strand DNA replication (OriL). This chain is DNA-directed RNA polymerase, mitochondrial, found in Mus musculus (Mouse).